The following is a 189-amino-acid chain: TATA-box-binding protein 1 (189 aa).

2 repeat units span residues 10–86 (IENV…FDKL) and 101–179 (VQNI…ISRL).

This sequence belongs to the TBP family.

General factor that plays a role in the activation of archaeal genes transcribed by RNA polymerase. Binds specifically to the TATA box promoter element which lies close to the position of transcription initiation. This is TATA-box-binding protein 1 (tbp1) from Haloferax volcanii (strain ATCC 29605 / DSM 3757 / JCM 8879 / NBRC 14742 / NCIMB 2012 / VKM B-1768 / DS2) (Halobacterium volcanii).